Here is a 251-residue protein sequence, read N- to C-terminus: S-acyl fatty acid synthase thioesterase, medium chain (251 aa).

Active-site residues include S90 and H226.

It belongs to the thioesterase family.

It carries out the reaction (9Z)-octadecenoyl-[ACP] + H2O = (9Z)-octadecenoate + holo-[ACP] + H(+). Its function is as follows. In fatty acid biosynthesis chain termination and release of the free fatty acid product is achieved by hydrolysis of the thio ester by a thioesterase I, a component of the fatty acid synthetase complex. The chain length of the released fatty acid is usually C16. However, in the mammary glands of non-ruminant mammals, and in the uropygial gland of certain waterfowl there exists a second thioesterase which releases medium-chain length fatty acids (C8 to C2). This chain is S-acyl fatty acid synthase thioesterase, medium chain, found in Anas platyrhynchos (Mallard).